The chain runs to 145 residues: Polytheonamide B (145 aa).

The propeptide occupies 1 to 96 (MADSDNTPTS…DDDLDQAAGG (96 aa)). Threonine 97 carries the post-translational modification 2-oxo-5,5-dimethylhexanoate. Isoleucine 99 bears the 3-methylisoleucine mark. Valine 101 carries the post-translational modification 3-methylvaline. Position 102 is a 3-methyl-D-valine (valine 102). Valine 103 is modified (3-methylvaline). Alanine 104 carries the post-translational modification D-alanine (Ala). Valine 105 is modified (3-methylvaline). 3-methyl-D-valine occurs at positions 106 and 110. Asparagine 112 carries the N4-methyl-D-asparagine modification. 3-hydroxyvaline (Thr) is present on threonine 113. A 3-methylvaline modification is found at valine 117. At asparagine 118 the chain carries N4-methyl-D-asparagine. Glutamine 119 carries the (3S)-3-methylglutamine modification. Position 120 is a 3-hydroxy-D-valine (valine 120). Residue asparagine 124 is modified to N4-methyl-D-asparagine. Asparagine 126 carries the post-translational modification (3R)-N4-methyl-3-hydroxy-D-asparagine. Valine 127 carries the post-translational modification 3-methylvaline. Valine 128 is subject to 3-hydroxy-D-valine. N4-methyl-D-asparagine occurs at positions 130 and 132. Asparagine 134 bears the (3R)-N4-methyl-3-hydroxy-D-asparagine mark. The residue at position 136 (asparagine 136) is an N4-methyl-D-asparagine. At serine 138 the chain carries D-serine (Ser). A D-asparagine modification is found at asparagine 140. Residue methionine 141 is modified to 3,3-dimethylmethionine. Asparagine 142 carries the D-asparagine modification. Threonine 144 is subject to D-threonine.

In terms of processing, epimerization of most, and perhaps all, L- to D-amino acids is catalyzed by PoyD, when PoyA and PoyD are coexpressed in E.coli. N-methylations are catalyzed by PoyE, when PoyA and PoyE are coexpressed in E.coli. Post-translationally, to obtain 2-oxo-5,5-dimethylhexanoate, Thr-97 is firstly dehydrated by PoyF. The second step possibly corresponds to methylation by PoyB/C, and the third step may be a cleavage by PoyH/J.

In terms of biological role, antimicrobial peptide active against Gram-positive bacteria (MIC=4-&gt;125 ug/ml). May act by forming transmembrane ion channels, since the peptide rapidly depolarizes the bacterial cytoplasmic membrane, simultaneously decreasing the membrane potential and intracellular potassium contents. This is Polytheonamide B from Bacterium symbiont subsp. Theonella swinhoei (strain pTSMAC1).